A 214-amino-acid polypeptide reads, in one-letter code: Adenylate kinase (214 aa).

10-15 provides a ligand contact to ATP; the sequence is GAGKGT. Residues 30–59 form an NMP region; the sequence is STGDILRAAVKDMTPMGGKAKSFMDAGALV. Residues threonine 31, arginine 36, 57–59, 85–88, and glutamine 92 each bind AMP; these read ALV and GFPR. Positions 126-163 are LID; it reads GRRTCRNCGKGFHVSFDPPKSSGICDECSGELYQRDDD. An ATP-binding site is contributed by arginine 127. Zn(2+) contacts are provided by cysteine 130, cysteine 133, cysteine 150, and cysteine 153. Residues arginine 160 and arginine 171 each contribute to the AMP site. Glycine 199 is a binding site for ATP.

The protein belongs to the adenylate kinase family. Monomer.

The protein resides in the cytoplasm. It catalyses the reaction AMP + ATP = 2 ADP. Its pathway is purine metabolism; AMP biosynthesis via salvage pathway; AMP from ADP: step 1/1. In terms of biological role, catalyzes the reversible transfer of the terminal phosphate group between ATP and AMP. Plays an important role in cellular energy homeostasis and in adenine nucleotide metabolism. In Geotalea daltonii (strain DSM 22248 / JCM 15807 / FRC-32) (Geobacter daltonii), this protein is Adenylate kinase.